The following is a 320-amino-acid chain: MSKSESPKEPEQLRKLFIGGLSFETTDESLRSHFEQWGTLTDCVVMRDPNTKRSRGFGFVTYATVEKVDAAMNARPHKVDGRVVEPKRAVSREDSQRPGAHLTVKKIFVGGIKEDTEEHHLRDYFEQYGKIEVIEIMTDRGSGKKRGFAFVTFDDHNSVDKIVIQKYHTVNGHNCEVRKALSKQEMASASSSQRGRSGSGNFGGGRGGGFGGNDNFGRGGNFSGRGGFGGSRGGGGYGGSGDGYNGFGNDGSNFGGGGSYNDFGNYNNQSSNFGPMKGGNFGGRSLGPYGGGGQYFAKPRNQGGYGGSSSSSSYGSGRRF.

An N-acetylmethionine modification is found at M1. S2 is subject to N-acetylserine; in Heterogeneous nuclear ribonucleoprotein A1, N-terminally processed. S2 carries the post-translational modification Phosphoserine. K3 bears the N6-acetyllysine; alternate mark. K3 is covalently cross-linked (Glycyl lysine isopeptide (Lys-Gly) (interchain with G-Cter in SUMO2); alternate). S4 and S6 each carry phosphoserine. Positions 4 to 94 (SESPKEPEQL…EPKRAVSRED (91 aa)) are globular A domain. K8 participates in a covalent cross-link: Glycyl lysine isopeptide (Lys-Gly) (interchain with G-Cter in SUMO2). 2 consecutive RRM domains span residues 14-97 (RKLF…DSQR) and 105-184 (KKIF…LSKQ). Phosphoserine is present on S22. K78 participates in a covalent cross-link: Glycyl lysine isopeptide (Lys-Gly) (interchain with G-Cter in SUMO2). The globular B domain stretch occupies residues 95–185 (SQRPGAHLTV…EVRKALSKQE (91 aa)). K113 participates in a covalent cross-link: Glycyl lysine isopeptide (Lys-Gly) (interchain with G-Cter in SUMO). Glycyl lysine isopeptide (Lys-Gly) (interchain with G-Cter in SUMO2) cross-links involve residues K179 and K183. The tract at residues 182 to 216 (SKQEMASASSSQRGRSGSGNFGGGRGGGFGGNDNF) is disordered. The residue at position 192 (S192) is a Phosphoserine; by MKNK2. R194 is modified (asymmetric dimethylarginine; alternate). The residue at position 194 (R194) is a Dimethylated arginine; alternate. R194 carries the post-translational modification Omega-N-methylarginine; alternate. Residues 197 to 216 (SGSGNFGGGRGGGFGGNDNF) are compositionally biased toward gly residues. S199 carries the post-translational modification Phosphoserine. Asymmetric dimethylarginine; alternate is present on residues R206, R218, R225, and R232. Dimethylated arginine; alternate is present on R206. Omega-N-methylarginine; alternate occurs at positions 206, 218, 225, and 232. The tract at residues 218 to 240 (RGGNFSGRGGFGGSRGGGGYGGS) is RNA-binding RGG-box. The residue at position 225 (R225) is a Dimethylated arginine; alternate. The tract at residues 268–305 (NQSSNFGPMKGGNFGGRSLGPYGGGGQYFAKPRNQGGY) is nuclear targeting sequence. Gly residues predominate over residues 277–294 (KGGNFGGRSLGPYGGGGQ). The interval 277–320 (KGGNFGGRSLGPYGGGGQYFAKPRNQGGYGGSSSSSSYGSGRRF) is disordered. At R284 the chain carries Omega-N-methylarginine. S285 is subject to Phosphoserine. An N6-acetyllysine; alternate modification is found at K298. Residue K298 forms a Glycyl lysine isopeptide (Lys-Gly) (interchain with G-Cter in SUMO2); alternate linkage. Position 300 is an omega-N-methylarginine (R300). Positions 308 to 320 (SSSSSSYGSGRRF) are enriched in low complexity. Position 309 is a phosphoserine (S309). Phosphoserine; by MKNK2 is present on residues S310, S311, and S312. Phosphoserine occurs at positions 313 and 316. An Omega-N-methylarginine modification is found at R318.

In terms of assembly, identified in the spliceosome C complex. Identified in a IGF2BP1-dependent mRNP granule complex containing untranslated mRNAs. Interacts with SEPT6, C9orf72, KHDRBS1, UBQLN2. Interacts with PPIA/CYPA. In terms of processing, sumoylated.

It is found in the nucleus. It localises to the cytoplasm. In terms of biological role, involved in the packaging of pre-mRNA into hnRNP particles, transport of poly(A) mRNA from the nucleus to the cytoplasm and modulation of splice site selection. Plays a role in the splicing of pyruvate kinase PKM by binding repressively to sequences flanking PKM exon 9, inhibiting exon 9 inclusion and resulting in exon 10 inclusion and production of the PKM M2 isoform. Binds to the IRES and thereby inhibits the translation of the apoptosis protease activating factor APAF1. May bind to specific miRNA hairpins. In Macaca mulatta (Rhesus macaque), this protein is Heterogeneous nuclear ribonucleoprotein A1 (HNRNPA1).